The following is a 334-amino-acid chain: Pantothenate synthetase (334 aa).

34–41 (MGALHEGH) contributes to the ATP binding site. Catalysis depends on H41, which acts as the Proton donor. Q71 is a (R)-pantoate binding site. Position 71 (Q71) interacts with beta-alanine. Position 158–161 (158–161 (GQKD)) interacts with ATP. Q164 contributes to the (R)-pantoate binding site. ATP contacts are provided by residues V187 and 195–198 (LSSR). A disordered region spans residues 288–334 (PLMLGTRGPAGEASPPNRERSEPGSAEQNKSPGEARTTPSGTSEASE). Over residues 313 to 334 (AEQNKSPGEARTTPSGTSEASE) the composition is skewed to polar residues.

This sequence belongs to the pantothenate synthetase family. As to quaternary structure, homodimer.

Its subcellular location is the cytoplasm. The enzyme catalyses (R)-pantoate + beta-alanine + ATP = (R)-pantothenate + AMP + diphosphate + H(+). It participates in cofactor biosynthesis; (R)-pantothenate biosynthesis; (R)-pantothenate from (R)-pantoate and beta-alanine: step 1/1. Catalyzes the condensation of pantoate with beta-alanine in an ATP-dependent reaction via a pantoyl-adenylate intermediate. The polypeptide is Pantothenate synthetase (Nocardioides sp. (strain ATCC BAA-499 / JS614)).